We begin with the raw amino-acid sequence, 333 residues long: Low specificity L-threonine aldolase (333 aa).

The residue at position 197 (Lys197) is an N6-(pyridoxal phosphate)lysine.

This sequence belongs to the threonine aldolase family. In terms of assembly, homotetramer. The cofactor is pyridoxal 5'-phosphate.

It carries out the reaction L-threonine = acetaldehyde + glycine. The enzyme catalyses L-allo-threonine = acetaldehyde + glycine. Its function is as follows. Catalyzes the cleavage of L-allo-threonine and L-threonine to glycine and acetaldehyde. L-threo-phenylserine and L-erythro-phenylserine are also good substrates. This Escherichia coli O157:H7 protein is Low specificity L-threonine aldolase (ltaE).